We begin with the raw amino-acid sequence, 425 residues long: UDP-N-acetylglucosamine 1-carboxyvinyltransferase (425 aa).

22–23 (KN) is a binding site for phosphoenolpyruvate. Arginine 91 is a binding site for UDP-N-acetyl-alpha-D-glucosamine. Cysteine 115 functions as the Proton donor in the catalytic mechanism. Cysteine 115 is subject to 2-(S-cysteinyl)pyruvic acid O-phosphothioketal. UDP-N-acetyl-alpha-D-glucosamine contacts are provided by residues 120–124 (RPIDL), aspartate 305, and valine 327.

Belongs to the EPSP synthase family. MurA subfamily.

It localises to the cytoplasm. It carries out the reaction phosphoenolpyruvate + UDP-N-acetyl-alpha-D-glucosamine = UDP-N-acetyl-3-O-(1-carboxyvinyl)-alpha-D-glucosamine + phosphate. The protein operates within cell wall biogenesis; peptidoglycan biosynthesis. Functionally, cell wall formation. Adds enolpyruvyl to UDP-N-acetylglucosamine. The protein is UDP-N-acetylglucosamine 1-carboxyvinyltransferase of Coprothermobacter proteolyticus (strain ATCC 35245 / DSM 5265 / OCM 4 / BT).